The primary structure comprises 170 residues: 3-hydroxydecanoyl-[acyl-carrier-protein] dehydratase (170 aa).

His71 is an active-site residue.

It belongs to the thioester dehydratase family. FabA subfamily. In terms of assembly, homodimer.

It is found in the cytoplasm. The catalysed reaction is a (3R)-hydroxyacyl-[ACP] = a (2E)-enoyl-[ACP] + H2O. The enzyme catalyses (3R)-hydroxydecanoyl-[ACP] = (2E)-decenoyl-[ACP] + H2O. It carries out the reaction (2E)-decenoyl-[ACP] = (3Z)-decenoyl-[ACP]. It participates in lipid metabolism; fatty acid biosynthesis. In terms of biological role, necessary for the introduction of cis unsaturation into fatty acids. Catalyzes the dehydration of (3R)-3-hydroxydecanoyl-ACP to E-(2)-decenoyl-ACP and then its isomerization to Z-(3)-decenoyl-ACP. Can catalyze the dehydratase reaction for beta-hydroxyacyl-ACPs with saturated chain lengths up to 16:0, being most active on intermediate chain length. The protein is 3-hydroxydecanoyl-[acyl-carrier-protein] dehydratase of Chelativorans sp. (strain BNC1).